Reading from the N-terminus, the 442-residue chain is MQEMNLLPTPESPVTRQEKMATVWDEAEQDGIGEEVLKMSTEEIVQRTRLLDSEIKIMKSEVLRVTHELQAMKDKIKENSEKIKVNKTLPYLVSNVIELLDVDPNDQEEDGANIDLDSQRKGKCAVIKTSTRQTYFLPVIGLVDAEKLKPGDLVGVNKDSYLILETLPTEYDSRVKAMEVDERPTEQYSDIGGLDKQIQELVEAIVLPMNHKEKFENLGIQPPKGVLMYGPPGTGKTLLARACAAQTKATFLKLAGPQLVQMFIGDGAKLVRDAFALAKEKAPSIIFIDELDAIGTKRFDSEKAGDREVQRTMLELLNQLDGFQPNTQVKVIAATNRVDILDPALLRSGRLDRKIEFPMPNEEARARIMQIHSRKMNVSPDVNYEELARCTDDFNGAQCKAVCVEAGMIALRRGATELTHEDYMEGILEVQAKKKANLQYYA.

Serine 12 is modified (phosphoserine). Residue 230–237 (GPPGTGKT) participates in ATP binding. Serine 379 is subject to Phosphoserine.

The protein belongs to the AAA ATPase family. In terms of assembly, component of the 19S proteasome regulatory particle complex. The 26S proteasome consists of a 20S core particle (CP) and two 19S regulatory subunits (RP). The regulatory particle is made of a lid composed of 9 subunits, a base containing 6 ATPases including PSMC3 and few additional components. Interacts with PAAF1.

Its subcellular location is the cytoplasm. The protein resides in the nucleus. In terms of biological role, component of the 26S proteasome, a multiprotein complex involved in the ATP-dependent degradation of ubiquitinated proteins. This complex plays a key role in the maintenance of protein homeostasis by removing misfolded or damaged proteins, which could impair cellular functions, and by removing proteins whose functions are no longer required. Therefore, the proteasome participates in numerous cellular processes, including cell cycle progression, apoptosis, or DNA damage repair. PSMC3 belongs to the heterohexameric ring of AAA (ATPases associated with diverse cellular activities) proteins that unfolds ubiquitinated target proteins that are concurrently translocated into a proteolytic chamber and degraded into peptides. This is 26S proteasome regulatory subunit 6A (Psmc3) from Mus musculus (Mouse).